We begin with the raw amino-acid sequence, 175 residues long: NADH-ubiquinone oxidoreductase chain 6 (175 aa).

5 helical membrane-spanning segments follow: residues 1-21 (MMMY…VGVS), 25-45 (SPIY…GVIL), 47-67 (FGGS…MLVV), 88-108 (VVLG…IYAL), and 149-169 (YGVW…VIIM).

It belongs to the complex I subunit 6 family. Core subunit of respiratory chain NADH dehydrogenase (Complex I) which is composed of 45 different subunits.

Its subcellular location is the mitochondrion inner membrane. It catalyses the reaction a ubiquinone + NADH + 5 H(+)(in) = a ubiquinol + NAD(+) + 4 H(+)(out). In terms of biological role, core subunit of the mitochondrial membrane respiratory chain NADH dehydrogenase (Complex I) which catalyzes electron transfer from NADH through the respiratory chain, using ubiquinone as an electron acceptor. Essential for the catalytic activity and assembly of complex I. In Balaenoptera physalus (Fin whale), this protein is NADH-ubiquinone oxidoreductase chain 6 (MT-ND6).